The chain runs to 335 residues: Mitochondrial amidoxime reducing component 2 (335 aa).

A mitochondrion-targeting transit peptide spans 1–35; that stretch reads MGASSSSALARLGLPAQARPRWLGVAVLGLAAVAL. Residues K59, K138, and K144 each participate in a glycyl lysine isopeptide (Lys-Gly) (interchain with G-Cter in ubiquitin) cross-link. K156 bears the N6-acetyllysine; alternate mark. A Glycyl lysine isopeptide (Lys-Gly) (interchain with G-Cter in ubiquitin); alternate cross-link involves residue K156. Glycyl lysine isopeptide (Lys-Gly) (interchain with G-Cter in ubiquitin) cross-links involve residues K173, K187, K287, and K294. One can recognise an MOSC domain in the interval 188 to 334; it reads GRTSRKLLPT…LRVGDPVYRM (147 aa).

In terms of assembly, component of a complex composed of cytochrome b5, NADH-cytochrome b5 reductase (CYB5R3) and MTARC2. The cofactor is Mo-molybdopterin. Ubiquitinated by PRKN during mitophagy, leading to its degradation and enhancement of mitophagy. Deubiquitinated by USP30.

The protein localises to the mitochondrion outer membrane. It localises to the peroxisome. It carries out the reaction N(omega)-hydroxy-L-arginine + 2 Fe(II)-[cytochrome b5] + 2 H(+) = L-arginine + 2 Fe(III)-[cytochrome b5] + H2O. Functionally, catalyzes the reduction of N-oxygenated molecules, acting as a counterpart of cytochrome P450 and flavin-containing monooxygenases in metabolic cycles. As a component of prodrug-converting system, reduces a multitude of N-hydroxylated prodrugs particularly amidoximes, leading to increased drug bioavailability. May be involved in mitochondrial N(omega)-hydroxy-L-arginine (NOHA) reduction, regulating endogenous nitric oxide levels and biosynthesis. Postulated to cleave the N-OH bond of N-hydroxylated substrates in concert with electron transfer from NADH to cytochrome b5 reductase then to cytochrome b5, the ultimate electron donor that primes the active site for substrate reduction. The protein is Mitochondrial amidoxime reducing component 2 (MTARC2) of Macaca fascicularis (Crab-eating macaque).